Here is a 341-residue protein sequence, read N- to C-terminus: Anthranilate phosphoribosyltransferase (341 aa).

5-phospho-alpha-D-ribose 1-diphosphate contacts are provided by residues Gly81, 84–85 (GD), 91–94 (NVST), 109–117 (KHGNRSVSS), and Ser121. Anthranilate is bound at residue Gly81. Ser93 serves as a coordination point for Mg(2+). Asn112 is an anthranilate binding site. Arg167 is a binding site for anthranilate. Asp226 and Glu227 together coordinate Mg(2+).

Belongs to the anthranilate phosphoribosyltransferase family. In terms of assembly, homodimer. The cofactor is Mg(2+).

The enzyme catalyses N-(5-phospho-beta-D-ribosyl)anthranilate + diphosphate = 5-phospho-alpha-D-ribose 1-diphosphate + anthranilate. It functions in the pathway amino-acid biosynthesis; L-tryptophan biosynthesis; L-tryptophan from chorismate: step 2/5. Catalyzes the transfer of the phosphoribosyl group of 5-phosphorylribose-1-pyrophosphate (PRPP) to anthranilate to yield N-(5'-phosphoribosyl)-anthranilate (PRA). This is Anthranilate phosphoribosyltransferase from Saccharophagus degradans (strain 2-40 / ATCC 43961 / DSM 17024).